The chain runs to 177 residues: Probable DNA-directed RNA polymerase subunit delta (177 aa).

One can recognise an HTH HARE-type domain in the interval 14 to 81 (CSMIEVVHSV…GENRWGLRSW (68 aa)). Residues 93–177 (PQPKPKKKRK…ETEEEEEEEL (85 aa)) form a disordered region. Positions 106-177 (DGFDDYIEED…ETEEEEEEEL (72 aa)) are enriched in acidic residues.

Belongs to the RpoE family. RNAP is composed of a core of 2 alpha, a beta and a beta' subunits. The core is associated with a delta subunit and one of several sigma factors.

Its function is as follows. Participates in both the initiation and recycling phases of transcription. In the presence of the delta subunit, RNAP displays an increased specificity of transcription, a decreased affinity for nucleic acids, and an increased efficiency of RNA synthesis because of enhanced recycling. The sequence is that of Probable DNA-directed RNA polymerase subunit delta from Bacillus cereus (strain AH187).